The sequence spans 57 residues: Beta-defensin 3 (57 aa).

Position 16 is a pyrrolidone carboxylic acid (Q16). 3 disulfides stabilise this stretch: C24–C53, C31–C46, and C36–C54.

It belongs to the beta-defensin family. In terms of tissue distribution, neutrophilic granules.

It localises to the secreted. Its function is as follows. Has bactericidal activity. Active against E.coli ML35 and S.aureus 502A. The chain is Beta-defensin 3 (DEFB3) from Bos taurus (Bovine).